Reading from the N-terminus, the 1396-residue chain is DNA-directed RNA polymerase subunit beta' (1396 aa).

Zn(2+) is bound by residues Cys-72, Cys-74, Cys-87, and Cys-90. 3 residues coordinate Mg(2+): Asp-463, Asp-465, and Asp-467. Positions 814, 889, 896, and 899 each coordinate Zn(2+).

This sequence belongs to the RNA polymerase beta' chain family. In terms of assembly, the RNAP catalytic core consists of 2 alpha, 1 beta, 1 beta' and 1 omega subunit. When a sigma factor is associated with the core the holoenzyme is formed, which can initiate transcription. The cofactor is Mg(2+). It depends on Zn(2+) as a cofactor.

The enzyme catalyses RNA(n) + a ribonucleoside 5'-triphosphate = RNA(n+1) + diphosphate. In terms of biological role, DNA-dependent RNA polymerase catalyzes the transcription of DNA into RNA using the four ribonucleoside triphosphates as substrates. The polypeptide is DNA-directed RNA polymerase subunit beta' (Chlamydia trachomatis serovar L2b (strain UCH-1/proctitis)).